The following is an 833-amino-acid chain: Leucine--tRNA ligase (833 aa).

The short motif at 41–52 (PYPSGAGLHVGH) is the 'HIGH' region element. The short motif at 610-614 (KMSKS) is the 'KMSKS' region element. K613 is a binding site for ATP.

The protein belongs to the class-I aminoacyl-tRNA synthetase family.

The protein localises to the cytoplasm. The enzyme catalyses tRNA(Leu) + L-leucine + ATP = L-leucyl-tRNA(Leu) + AMP + diphosphate. This Streptococcus pyogenes serotype M1 protein is Leucine--tRNA ligase.